The chain runs to 484 residues: Zinc metalloproteinase-disintegrin stejnitin (484 aa).

The N-terminal stretch at 1-20 (MIQVLLVTICLAVFPYQGNS) is a signal peptide. Residues 21 to 192 (IILESGNVND…ASQLNLTPDE (172 aa)) constitute a propeptide that is removed on maturation. The residue at position 193 (Gln-193) is a Pyrrolidone carboxylic acid. The Peptidase M12B domain occupies 194–392 (RFIELVIVAD…YTSRCLYNGP (199 aa)). A Ca(2+)-binding site is contributed by Glu-197. Asn-254 is a glycosylation site (N-linked (GlcNAc...) asparagine). Residue Asp-281 participates in Ca(2+) binding. 3 disulfides stabilise this stretch: Cys-305/Cys-387, Cys-345/Cys-369, and Cys-347/Cys-352. Residues His-330, His-334, and His-340 each coordinate Zn(2+). Ca(2+) contacts are provided by Cys-387, Asn-390, Val-402, Asn-405, Glu-409, Glu-412, and Asp-415. Positions 400-484 (PPVCGNYYVE…GDCPRNPFRA (85 aa)) constitute a Disintegrin domain. Disulfide bonds link Cys-403/Cys-422, Cys-414/Cys-432, Cys-416/Cys-427, Cys-426/Cys-449, Cys-440/Cys-446, Cys-445/Cys-470, and Cys-458/Cys-477. The short motif at 462–464 (KGD) is the Cell attachment site element.

This sequence belongs to the venom metalloproteinase (M12B) family. P-II subfamily. P-IIb sub-subfamily. Zn(2+) is required as a cofactor. In terms of processing, the N-terminus is blocked. As to expression, expressed by the venom gland.

The protein localises to the secreted. Its function is as follows. Snake venom zinc metalloproteinase that inhibits ADP-induced platelet aggregation in human platelet-rich plasma (IC(50) is 175 nM) and cleaves alpha-(FGA) and subsequently the beta-chain (FGG) of bovine fibrinogen, leaving the gamma-chain unaffected. It is also able to inhibit proliferatin of ECV304 cells by inducing apoptosis of these cells. In Trimeresurus stejnegeri (Chinese green tree viper), this protein is Zinc metalloproteinase-disintegrin stejnitin.